The chain runs to 146 residues: Large ribosomal subunit protein uL15 (146 aa).

Residues 1–13 (MKLHELKAAEGSR) are compositionally biased toward basic and acidic residues. The interval 1–56 (MKLHELKAAEGSRRVRNRVGRGAGSGNGKTSGRGQKGQKARSGGGVRPGFEGGQLP) is disordered. Gly residues-rich tracts occupy residues 21–35 (RGAG…GRGQ) and 42–52 (SGGGVRPGFEG).

Belongs to the universal ribosomal protein uL15 family. As to quaternary structure, part of the 50S ribosomal subunit.

Binds to the 23S rRNA. This Staphylococcus haemolyticus (strain JCSC1435) protein is Large ribosomal subunit protein uL15.